The primary structure comprises 447 residues: Succinate--CoA ligase [ADP-forming] subunit beta, mitochondrial (447 aa).

Residues methionine 1–arginine 34 constitute a mitochondrion transit peptide. Residues alanine 45 to arginine 287 enclose the ATP-grasp domain. Residues lysine 82, glycine 89 to glycine 91, and glutamate 150 each bind ATP. 2 residues coordinate Mg(2+): asparagine 242 and aspartate 256. Substrate contacts are provided by residues asparagine 307 and glycine 364–valine 366.

It belongs to the succinate/malate CoA ligase beta subunit family. As to quaternary structure, heterodimer of an alpha and a beta subunit. Requires Mg(2+) as cofactor.

The protein resides in the mitochondrion. The enzyme catalyses succinate + ATP + CoA = succinyl-CoA + ADP + phosphate. Its pathway is carbohydrate metabolism; tricarboxylic acid cycle; succinate from succinyl-CoA (ligase route): step 1/1. Functionally, succinyl-CoA synthetase functions in the citric acid cycle (TCA), coupling the hydrolysis of succinyl-CoA to the synthesis of ATP and thus represents the only step of substrate-level phosphorylation in the TCA. The beta subunit provides nucleotide specificity of the enzyme and binds the substrate succinate, while the binding sites for coenzyme A and phosphate are found in the alpha subunit. The polypeptide is Succinate--CoA ligase [ADP-forming] subunit beta, mitochondrial (Neurospora crassa (strain ATCC 24698 / 74-OR23-1A / CBS 708.71 / DSM 1257 / FGSC 987)).